A 755-amino-acid chain; its full sequence is MEALIPVINKLQDVFNTVGADIIQLPQIVVVGTQSSGKSSVLESLVGRDLLPRGTGVVTRRPLILQLVHVSPEDKRKTTGEENDPATWKNSRHLSKGVEAEEWGKFLHTKNKLYTDFDEIRQEIENETERISGNNKGVSPEPIHLKVFSPNVVNLTLVDLPGMTKVPVGDQPKDIELQIRELILRFISNPNSIILAVTAANTDMATSEALKISREVDPDGRRTLAVITKLDLMDAGTDAMDVLMGRVIPVKLGIIGVVNRSQLDINNKKSVTDSIRDEYAFLQKKYPSLANRNGTKYLARTLNRLLMHHIRDCLPELKTRINVLAAQYQSLLNSYGEPVDDKSATLLQLITKFATEYCNTIEGTAKYIETSELCGGARICYIFHETFGRTLESVDPLGGLNTIDILTAIRNATGPRPALFVPEVSFELLVKRQIKRLEEPSLRCVELVHEEMQRIIQHCSNYSTQELLRFPKLHDAIVEVVTCLLRKRLPVTNEMVHNLVAIELAYINTKHPDFADACGLMNNNIEEQRRNRLARELPSAVSRDKSSKVPSALAPASQEPSPAASAEADGKLIQDNRRETKNVASAGGGIGDGGRIGDGGQEPTTGNWRGMLKTSKAEELLAEEKSKPIPIMPASPQKGHAVNLLDVPVPVARKLSAREQRDCEVIERLIKSYFLIVRKNIQDSVPKAVMHFLVNHVKDTLQSELVGQLYKSSLLDDLLTESEDMAQRRKEAADMLKALQGASQIIAEIRETHLW.

Met-1 carries the post-translational modification N-acetylmethionine. A Dynamin-type G domain is found at 22–315 (IIQLPQIVVV…LMHHIRDCLP (294 aa)). Positions 32–39 (GTQSSGKS) are G1 motif. 32 to 40 (GTQSSGKSS) is a binding site for GTP. Residues 58–60 (VTR) are G2 motif. The G3 motif stretch occupies residues 159–162 (DLPG). The segment at 228 to 231 (TKLD) is G4 motif. GTP-binding positions include 228-234 (TKLDLMD) and 259-262 (NRSQ). Residues 258–261 (VNRS) are G5 motif. The interval 357–502 (YCNTIEGTAK…NEMVHNLVAI (146 aa)) is middle domain. Residues 461-704 (NYSTQELLRF…NHVKDTLQSE (244 aa)) form an interaction with GSK3B region. Residues 515-582 (ADACGLMNNN…IQDNRRETKN (68 aa)) are b domain. The disordered stretch occupies residues 536–610 (ELPSAVSRDK…QEPTTGNWRG (75 aa)). Position 542 is a phosphoserine (Ser-542). Residues Lys-545 and Lys-548 each participate in a glycyl lysine isopeptide (Lys-Gly) (interchain with G-Cter in SUMO) cross-link. The span at 550–567 (PSALAPASQEPSPAASAE) shows a compositional bias: low complexity. The residue at position 561 (Ser-561) is a Phosphoserine. Basic and acidic residues predominate over residues 568-581 (ADGKLIQDNRRETK). Residues Lys-571 and Lys-581 each participate in a glycyl lysine isopeptide (Lys-Gly) (interchain with G-Cter in SUMO) cross-link. Gly residues predominate over residues 586–600 (AGGGIGDGGRIGDGG). 2 O-linked (GlcNAc) threonine glycosylation sites follow: Thr-604 and Thr-605. Lys-613 is covalently cross-linked (Glycyl lysine isopeptide (Lys-Gly) (interchain with G-Cter in SUMO)). Lys-616 is subject to N6-acetyllysine; alternate. Residue Lys-616 forms a Glycyl lysine isopeptide (Lys-Gly) (interchain with G-Cter in SUMO); alternate linkage. Residue Lys-625 forms a Glycyl lysine isopeptide (Lys-Gly) (interchain with G-Cter in SUMO) linkage. Position 626 is a phosphoserine (Ser-626). Lys-627 participates in a covalent cross-link: Glycyl lysine isopeptide (Lys-Gly) (interchain with G-Cter in SUMO). Residue Ser-635 is modified to Phosphoserine; by CDK1. Ser-656 is subject to Phosphoserine; by CAMK1 and PKA. Cys-663 carries the S-nitrosocysteine modification. Residues 663–754 (CEVIERLIKS…IIAEIRETHL (92 aa)) form the GED domain. An important for homodimerization region spans residues 673-687 (YFLIVRKNIQDSVPK).

This sequence belongs to the TRAFAC class dynamin-like GTPase superfamily. Dynamin/Fzo/YdjA family. As to quaternary structure, homotetramer; dimerizes through the N-terminal GTP-middle region of one molecule binding to the GED domain of another DNM1L molecule. Oligomerizes in a GTP-dependent manner to form membrane-associated tubules with a spiral pattern. Interacts with GSK3B and MARCHF5. Interacts (via the GTPase and B domains) with UBE2I; the interaction promotes sumoylation of DNM1L, mainly in its B domain. Interacts with PPP3CA; the interaction dephosphorylates DNM1L and regulates its transition to mitochondria. Interacts with BCL2L1 isoform BCL-X(L) and CLTA; DNM1L and BCL2L1 isoform BCL-X(L) may form a complex in synaptic vesicles that also contains clathrin and MFF. Interacts with MFF; the interaction is inhinited by C11orf65/MFI. Interacts with FIS1. Interacts with MIEF2 and MIEF1; GTP-dependent this regulates GTP hydrolysis and DNM1L oligomerization. Interacts with PGAM5; this interaction leads to dephosphorylation at Ser-656 and activation of GTPase activity and eventually to mitochondria fragmentation. Interacts with RALBP1; during mitosis, recruits DNM1L to the mitochondrion and mediates its activation by the mitotic kinase cyclin B-CDK1. Interacts with FUNDC1; this interaction recruits DNM1L/DRP1 at ER-mitochondria contact sites. Post-translationally, phosphorylation/dephosphorylation events on two sites near the GED domain regulate mitochondrial fission. Phosphorylation on Ser-656 by CAMK1 and PKA inhibits the GTPase activity, leading to a defect in mitochondrial fission promoting mitochondrial elongation. Dephosphorylated on this site by PPP3CA which promotes mitochondrial fission. Phosphorylation on Ser-635 by PINK1 activates the GTPase activity and promotes mitochondrial fission. Phosphorylation on Ser-635 by CDK1 also promotes mitochondrial fission. Phosphorylated in a circadian manner at Ser-656. Dephosphorylated by PGAM5. In terms of processing, sumoylated on various lysine residues within the B domain, probably by MUL1. Sumoylation positively regulates mitochondrial fission. Desumoylated by SENP5 during G2/M transition of mitosis. Appears to be linked to its catalytic activity. S-nitrosylation increases DNM1L dimerization, mitochondrial fission and causes neuronal damage. Post-translationally, O-GlcNAcylation augments the level of the GTP-bound active form of DNM1L and induces translocation from the cytoplasm to mitochondria in cardiomyocytes. It also decreases phosphorylation at Ser-656. In terms of processing, ubiquitination by MARCHF5 affects mitochondrial morphology. Expressed in all tissues tested (at protein level). Longer isoforms are preferentially expressed in brain.

It is found in the cytoplasm. Its subcellular location is the cytosol. The protein localises to the golgi apparatus. It localises to the endomembrane system. The protein resides in the mitochondrion outer membrane. It is found in the peroxisome. Its subcellular location is the membrane. The protein localises to the clathrin-coated pit. It localises to the cytoplasmic vesicle. The protein resides in the secretory vesicle. It is found in the synaptic vesicle membrane. It carries out the reaction GTP + H2O = GDP + phosphate + H(+). Functions in mitochondrial and peroxisomal division. Mediates membrane fission through oligomerization into membrane-associated tubular structures that wrap around the scission site to constrict and sever the mitochondrial membrane through a GTP hydrolysis-dependent mechanism. The specific recruitment at scission sites is mediated by membrane receptors like MFF, MIEF1 and MIEF2 for mitochondrial membranes. While the recruitment by the membrane receptors is GTP-dependent, the following hydrolysis of GTP induces the dissociation from the receptors and allows DNM1L filaments to curl into closed rings that are probably sufficient to sever a double membrane. Acts downstream of PINK1 to promote mitochondrial fission in a PRKN-dependent manner. Plays an important role in mitochondrial fission during mitosis. Through its function in mitochondrial division, ensures the survival of at least some types of postmitotic neurons, including Purkinje cells, by suppressing oxidative damage. Required for normal brain development, including that of cerebellum. Facilitates developmentally regulated apoptosis during neural tube formation. Required for a normal rate of cytochrome c release and caspase activation during apoptosis; this requirement may depend upon the cell type and the physiological apoptotic cues. Required for formation of endocytic vesicles. Proposed to regulate synaptic vesicle membrane dynamics through association with BCL2L1 isoform Bcl-X(L) which stimulates its GTPase activity in synaptic vesicles; the function may require its recruitment by MFF to clathrin-containing vesicles. Required for programmed necrosis execution. Rhythmic control of its activity following phosphorylation at Ser-656 is essential for the circadian control of mitochondrial ATP production. This Rattus norvegicus (Rat) protein is Dynamin-1-like protein.